The primary structure comprises 239 residues: tRNA (guanine-N(1)-)-methyltransferase (239 aa).

S-adenosyl-L-methionine is bound by residues glycine 108 and 128-133 (VGNFIV).

It belongs to the RNA methyltransferase TrmD family. In terms of assembly, homodimer.

It localises to the cytoplasm. It carries out the reaction guanosine(37) in tRNA + S-adenosyl-L-methionine = N(1)-methylguanosine(37) in tRNA + S-adenosyl-L-homocysteine + H(+). In terms of biological role, specifically methylates guanosine-37 in various tRNAs. This Helicobacter hepaticus (strain ATCC 51449 / 3B1) protein is tRNA (guanine-N(1)-)-methyltransferase.